The chain runs to 582 residues: MEDNKELQCLICKYSDTDDLVFGEWMIVRNLQVHYFCLLLSTHLPQRGGDSSGILGFLLRDIREEAAAAEKRKCWYCNKIGASLQCDRCRSLFHLKCGLENRAVFEFCGQYKSYCYKCRPMDDYKRQLQSNPPRNATCPICFSSIYKVELHCVVYGDCCRLGFAHKKCMRQYALTSGYYLRCIWCRSERFRDSIRLQSVFVPDRDATWEKQRNAYRELHERNLKCDQPNCLCPSGRTYNRLSWVILCCSSCAATSAHLKCLVGALRLPKKRERTDFKCSMCLDVERRIAEGPARTTEETNADGDNQVDGSFYVQKLGPDAATRSLTQTPVFSEEDESERSSNITVIFSQPKSNATSERLSLSPPQEEMIVEIPDSPEASPKTSIDENHSPQPIARRDTSDSPQPIAASEIPDSPQPTAASEIPDLPQTTAINVNPELTQQTALNTIPHSPQPEASFSTQLVSQTFDCPQPQEQAVAKAPNSPSLPKEDPNTLLVLKSGFQCPGEPFFYLVIYEFEHGTCMGECIGTCVLRFKEDDPRIQDTSQAALERVNITPDDVWCRSEDRGIFEHIEKFHEWYRSEGFS.

Residues 6-44 form a C2HC pre-PHD-type zinc finger; that stretch reads ELQCLICKYSDTDDLVFGEWMIVRNLQVHYFCLLLSTHL. The segment at 6 to 119 is extended PHD domain (ePHD); the sequence is ELQCLICKYS…QYKSYCYKCR (114 aa). The segment at 72-119 adopts a PHD-type; atypical zinc-finger fold; that stretch reads RKCWYCNKIGASLQCDRCRSLFHLKCGLENRAVFEFCGQYKSYCYKCR. Disordered regions lie at residues 292 to 311 and 323 to 422; these read PARTTEETNADGDNQVDGSF and RSLT…ASEI. The segment covering 340 to 363 has biased composition (polar residues); that stretch reads SSNITVIFSQPKSNATSERLSLSP. A compositionally biased stretch (basic and acidic residues) spans 383–399; sequence SIDENHSPQPIARRDTS.

Functionally, required for survival of imaginal disk cells possibly by regulation of cell apoptosis. Required for germline stem cell self-renewal through mediation of BMP signaling. The sequence is that of Pineapple eye protein from Drosophila melanogaster (Fruit fly).